The chain runs to 312 residues: Malate dehydrogenase (312 aa).

NAD(+) is bound by residues 7–13 and Asp-34; that span reads GAAGGIG. Residues Arg-81 and Arg-87 each coordinate substrate. NAD(+) contacts are provided by residues Asn-94 and 117-119; that span reads ITN. Asn-119 and Arg-153 together coordinate substrate. Catalysis depends on His-177, which acts as the Proton acceptor. Met-227 contacts NAD(+).

This sequence belongs to the LDH/MDH superfamily. MDH type 1 family. As to quaternary structure, homodimer.

The catalysed reaction is (S)-malate + NAD(+) = oxaloacetate + NADH + H(+). Its function is as follows. Catalyzes the reversible oxidation of malate to oxaloacetate. The polypeptide is Malate dehydrogenase (Photobacterium profundum (strain SS9)).